The primary structure comprises 240 residues: Uridylate kinase (240 aa).

13-16 (KASG) lines the ATP pocket. The tract at residues 21–26 (GSQGFG) is involved in allosteric activation by GTP. Residue Gly-55 participates in UMP binding. ATP is bound by residues Gly-56 and Arg-60. Residues Asp-75 and 136-143 (TGNPFFTT) contribute to the UMP site. Residues Thr-163, Gln-164, Tyr-169, and Asp-172 each contribute to the ATP site.

This sequence belongs to the UMP kinase family. Homohexamer.

The protein localises to the cytoplasm. The enzyme catalyses UMP + ATP = UDP + ADP. It functions in the pathway pyrimidine metabolism; CTP biosynthesis via de novo pathway; UDP from UMP (UMPK route): step 1/1. With respect to regulation, allosterically activated by GTP. Inhibited by UTP. Its function is as follows. Catalyzes the reversible phosphorylation of UMP to UDP. This chain is Uridylate kinase, found in Brucella suis biovar 1 (strain 1330).